Reading from the N-terminus, the 652-residue chain is Carboxypeptidase S1 homolog A (652 aa).

The first 19 residues, 1–19 (MRLAASIAVALPVIGAASA), serve as a signal peptide directing secretion. The cysteines at positions 50 and 121 are disulfide-linked. 6 N-linked (GlcNAc...) asparagine glycosylation sites follow: Asn-77, Asn-132, Asn-161, Asn-168, Asn-184, and Asn-202. Ser-238 is a catalytic residue. Residues Asn-260, Asn-299, Asn-347, and Asn-410 are each glycosylated (N-linked (GlcNAc...) asparagine). 2 disulfide bridges follow: Cys-325/Cys-361 and Cys-332/Cys-354. Asp-458 is a catalytic residue. A substrate-binding site is contributed by Cys-461. N-linked (GlcNAc...) asparagine glycosylation is found at Asn-474, Asn-492, and Asn-505. The active site involves His-516. Glu-517 lines the substrate pocket. Asn-594 is a glycosylation site (N-linked (GlcNAc...) asparagine). The tract at residues 608-628 (AASKGNPPPTTTSSPTASPTA) is disordered. Low complexity predominate over residues 618–628 (TTSSPTASPTA). The GPI-anchor amidated glycine moiety is linked to residue Gly-629. The propeptide at 630 to 652 (SAMLKAPVAMLAISALTVLAFYL) is removed in mature form.

It belongs to the peptidase S10 family.

It is found in the cell membrane. It carries out the reaction Preferential release of a C-terminal arginine or lysine residue.. Extracellular serine carboxypeptidase that contributes to pathogenicity. The sequence is that of Carboxypeptidase S1 homolog A (SCPA) from Trichophyton verrucosum (strain HKI 0517).